A 306-amino-acid polypeptide reads, in one-letter code: TnpB-like protein aq_aa05 (306 aa).

Residues Cys213, Cys216, Cys234, and Cys237 each contribute to the Zn(2+) site.

It belongs to the transposase 35 family.

The polypeptide is TnpB-like protein aq_aa05 (Aquifex aeolicus (strain VF5)).